A 114-amino-acid polypeptide reads, in one-letter code: Large ribosomal subunit protein bL20 (114 aa).

It belongs to the bacterial ribosomal protein bL20 family.

Binds directly to 23S ribosomal RNA and is necessary for the in vitro assembly process of the 50S ribosomal subunit. It is not involved in the protein synthesizing functions of that subunit. This chain is Large ribosomal subunit protein bL20, found in Amoebophilus asiaticus (strain 5a2).